A 1334-amino-acid chain; its full sequence is Adenylate cyclase type 9 (1334 aa).

2 disordered regions span residues 1 to 28 (MASPPHQQLLHHHSTEVSCDSSGDSNSV) and 49 to 71 (ISSSCSSGESGGVGRGGGGGLRR). Residues 1-113 (MASPPHQQLL…CFPQTQRRFR (113 aa)) lie on the Cytoplasmic side of the membrane. Over residues 16-28 (EVSCDSSGDSNSV) the composition is skewed to polar residues. Residues 57-69 (ESGGVGRGGGGGL) show a composition bias toward gly residues. A helical membrane pass occupies residues 114–134 (YALFYIGSACLLWGIYFGVHM). Topologically, residues 135–137 (REK) are extracellular. Residues 138-158 (QMVFMVPALCFLLVCVAFFAF) traverse the membrane as a helical segment. Residues 159–167 (TFTKAYARR) lie on the Cytoplasmic side of the membrane. Residues 168–187 (YVWTSGYTLLVFALTLAPQF) form a helical membrane-spanning segment. The Extracellular portion of the chain corresponds to 188–207 (QPWTLGERQRVQPRPAAPVD). A helical transmembrane segment spans residues 208 to 227 (TCLSQVGSFSMCVEVLLLLY). The Cytoplasmic segment spans residues 228-233 (TVMHLP). A helical transmembrane segment spans residues 234–250 (LYLSLFLGLSYSVLFET). Residues 251–269 (SAFRDESCTLLGGGAVYWE) lie on the Extracellular side of the membrane. Residues 270–290 (LLSKAFLHVCIHAIGIHLFIM) form a helical membrane-spanning segment. Residues 291-768 (SEVRSRSTFL…VKTFASATFS (478 aa)) lie on the Cytoplasmic side of the membrane. The tract at residues 338 to 363 (QGDDESENSVKRHSTSSPKNRKKKPS) is disordered. Residues 348–363 (KRHSTSSPKNRKKKPS) show a composition bias toward basic residues. Residues D388, I389, and D432 each contribute to the Mg(2+) site. ATP-binding positions include 388–393 (DIVGFT), 430–432 (LGD), and R476. Positions 635 to 670 (GCQDEHKNSTKAPGGHSPKTQNGLLSPPQEEKLSNS) are disordered. Residues 769–789 (SLLDVFLSTTVFLILSVTCFL) traverse the membrane as a helical segment. Over 790–800 (KHGMVASPPPP) the chain is Extracellular. Residues 801 to 821 (AAVVVFVIAILLEVLSLVISV) traverse the membrane as a helical segment. Over 822-849 (RMVFFLEEVMACTKRLLELISGWLPRHF) the chain is Cytoplasmic. A helical membrane pass occupies residues 850–870 (LGAILVSLPALAVFSHFTSDF). The Extracellular segment spans residues 871–873 (ETN). Residues 874–894 (IHYTMFMCCAILIAIVQYCNF) traverse the membrane as a helical segment. Residues 895 to 902 (CQLSSWMR) lie on the Cytoplasmic side of the membrane. Residues 903-923 (SLLATVVGAVLLILLYVSLCP) form a helical membrane-spanning segment. Residues 924–957 (DSSVETLHLDLAQNLSSRKSPCNSSMPADVKRPA) lie on the Extracellular side of the membrane. Residues N937 and N946 are each glycosylated (N-linked (GlcNAc...) asparagine). The helical transmembrane segment at 958 to 978 (DLIGQEVILAVFLLLLLVWFL) threads the bilayer. Topologically, residues 979–1334 (NRSFEVSYRL…LTKLNVSKSV (356 aa)) are cytoplasmic. ATP-binding positions include K1090, 1167 to 1169 (DIW), 1174 to 1178 (NIASR), and K1214. A disordered region spans residues 1266–1303 (SVQNSDKTAHATDNSETKDALPSSKKLQKEPTKAEERC). 2 stretches are compositionally biased toward basic and acidic residues: residues 1272–1284 (KTAHATDNSETKD) and 1292–1303 (LQKEPTKAEERC).

It belongs to the adenylyl cyclase class-4/guanylyl cyclase family. Requires Mg(2+) as cofactor. Mn(2+) is required as a cofactor. As to expression, detected in embryonic heart (at protein level).

The protein resides in the cell membrane. Its subcellular location is the membrane. It catalyses the reaction ATP = 3',5'-cyclic AMP + diphosphate. Its activity is regulated as follows. Insensitive to calcium/calmodulin, forskolin and somatostatin. Stimulated by beta-adrenergic receptor activation. Activity is down-regulated by calcium/calcineurin. Adenylyl cyclase that catalyzes the formation of the signaling molecule cAMP in response to activation of G protein-coupled receptors. This chain is Adenylate cyclase type 9 (ADCY9), found in Gallus gallus (Chicken).